A 115-amino-acid polypeptide reads, in one-letter code: Pre-histone-like nucleoprotein (115 aa).

Positions 2–23 (PILISPSDNTGWGLGKLRIRAT) are excised as a propeptide. Residues 85–99 (GRRTARSARRRSARK) are compositionally biased toward basic residues. The disordered stretch occupies residues 85-115 (GRRTARSARRRSARKSRSEKTGPRIRYTRRI). Residues 114 to 115 (RI) carry the Nuclear localization signal motif.

This sequence belongs to the adenoviridae histone-like nucleoprotein family. As to quaternary structure, interacts with the core-capsid bridging protein; this interaction bridges the virus core to the capsid. Interacts with host NPM1; this interaction might play a role in placing the pre-histone-like nucleoprotein on the viral DNA or regulating viral gene expression. Interacts with host HMGB1; this interaction inhibits host immune response. In terms of processing, cleaved near the N-terminus by the viral protease during virion maturation to form the mature protein.

The protein localises to the virion. Its subcellular location is the host nucleus. The protein resides in the host nucleolus. Functionally, plays a role in the inhibition of host immune response within the nucleus. Interacts with cellular nucleosomes and immobilizes the host immune danger signal HMGB1 on chromatin. In turn, prevents HMGB1 release out of the cell and thus decreases inflammation. Also plays a role in the wrapping and condensation of the viral DNA. May also promote viral genome import into the nucleus. The polypeptide is Pre-histone-like nucleoprotein (Pantherophis guttatus (Corn snake)).